The following is a 122-amino-acid chain: Serum amyloid A-1 protein (122 aa).

Residues 1 to 18 (MKPFVAIIFCFLILGVDS) form the signal peptide. Residues 19-45 (QRWFQFMKEAGQGTRDMWRAYTDMREA) are important for amyloid formation. Residues 100 to 122 (ANEWGRSGKDPNFFRPPGLPSKY) are disordered.

The protein belongs to the SAA family. In terms of assembly, homohexamer; dimer of trimers. Can form amyloid fibrils after partial proteolysis; the native, undenatured protein does not form amyloid fibrils (in vitro). Apolipoprotein of the HDL complex. Binds to heparin. Detected in liver, spleen and kidney.

Its subcellular location is the secreted. Major acute phase protein. The polypeptide is Serum amyloid A-1 protein (SAA1) (Mesocricetus auratus (Golden hamster)).